We begin with the raw amino-acid sequence, 96 residues long: Large ribosomal subunit protein bL27 (96 aa).

A propeptide spanning residues 1-9 (MLKFDIQHF) is cleaved from the precursor. The interval 1–33 (MLKFDIQHFAHKKGGGSTSNGRDSESKRLGAKR) is disordered. Basic and acidic residues predominate over residues 22 to 33 (RDSESKRLGAKR).

This sequence belongs to the bacterial ribosomal protein bL27 family. In terms of processing, the N-terminus is cleaved by ribosomal processing cysteine protease Prp.

The protein is Large ribosomal subunit protein bL27 of Listeria innocua serovar 6a (strain ATCC BAA-680 / CLIP 11262).